The sequence spans 366 residues: Protein lifeguard 1 (366 aa).

The segment at 1–141 (MSHEKSFLVS…GPPSYYDNQD (141 aa)) is disordered. Composition is skewed to pro residues over residues 14–44 (YPPP…PFQP) and 67–109 (GPYP…PNPY). Helical transmembrane passes span 160-180 (VFLV…VFTF), 192-212 (VWTY…LSCC), 223-243 (LVAL…IASF), 248-268 (AVIM…IFSM), 278-298 (VGVL…CIFI), 302-322 (VLEI…LAVD), and 341-361 (FAAL…LTII).

Belongs to the BI1 family. LFG subfamily.

It localises to the membrane. Functionally, potential apoptotic regulator. This chain is Protein lifeguard 1 (GRINA), found in Bos taurus (Bovine).